A 291-amino-acid polypeptide reads, in one-letter code: Phosphatidylcholine-sterol acyltransferase (291 aa).

Residue asparagine 28 is glycosylated (N-linked (GlcNAc...) asparagine). Serine 125 serves as the catalytic Nucleophile. Residue asparagine 179 is glycosylated (N-linked (GlcNAc...) asparagine). A disulfide bridge links cysteine 220 with cysteine 263. The active-site Charge relay system is the aspartate 252. An N-linked (GlcNAc...) asparagine glycan is attached at asparagine 280.

It belongs to the AB hydrolase superfamily. Lipase family.

The protein resides in the secreted. The catalysed reaction is a sterol + a 1,2-diacyl-sn-glycero-3-phosphocholine = a sterol ester + a 1-acyl-sn-glycero-3-phosphocholine. APOA1 is the most potent activator in plasma. Also activated by APOE, APOC1 and APOA4. In terms of biological role, central enzyme in the extracellular metabolism of plasma lipoproteins. Synthesized mainly in the liver and secreted into plasma where it converts cholesterol and phosphatidylcholines (lecithins) to cholesteryl esters and lysophosphatidylcholines on the surface of high and low density lipoproteins (HDLs and LDLs). The cholesterol ester is then transported back to the liver. Has a preference for plasma 16:0-18:2 or 18:O-18:2 phosphatidylcholines. Also produced in the brain by primary astrocytes, and esterifies free cholesterol on nascent APOE-containing lipoproteins secreted from glia and influences cerebral spinal fluid (CSF) APOE- and APOA1 levels. Together with APOE and the cholesterol transporter ABCA1, plays a key role in the maturation of glial-derived, nascent lipoproteins. Required for remodeling high-density lipoprotein particles into their spherical forms. The polypeptide is Phosphatidylcholine-sterol acyltransferase (LCAT) (Myodes glareolus (Bank vole)).